A 112-amino-acid polypeptide reads, in one-letter code: Mitochondrial import inner membrane translocase subunit TIM14-1 (112 aa).

Ala-2 carries the post-translational modification N-acetylalanine. A helical membrane pass occupies residues Ala-7–Gln-23. Residues Glu-53–Phe-112 form the J domain.

Belongs to the TIM14 family. Probable component of the PAM complex at least composed of a mitochondrial HSP70 protein, TIMM44 and TIMM14. The complex interacts with the TIMM23 component of the TIM17:23 complex.

It is found in the mitochondrion. It localises to the mitochondrion inner membrane. In terms of biological role, component of the PAM complex, a complex required for the translocation of transit peptide-containing proteins from the inner membrane into the mitochondrial matrix in an ATP-dependent manner. The polypeptide is Mitochondrial import inner membrane translocase subunit TIM14-1 (TIM14-1) (Arabidopsis thaliana (Mouse-ear cress)).